A 109-amino-acid polypeptide reads, in one-letter code: Nucleoid-associated protein BCB4264_A0025 (109 aa).

It belongs to the YbaB/EbfC family. In terms of assembly, homodimer.

The protein resides in the cytoplasm. Its subcellular location is the nucleoid. Functionally, binds to DNA and alters its conformation. May be involved in regulation of gene expression, nucleoid organization and DNA protection. The sequence is that of Nucleoid-associated protein BCB4264_A0025 from Bacillus cereus (strain B4264).